The sequence spans 177 residues: Peptide methionine sulfoxide reductase MsrA (177 aa).

The active site involves cysteine 15.

This sequence belongs to the MsrA Met sulfoxide reductase family.

It carries out the reaction L-methionyl-[protein] + [thioredoxin]-disulfide + H2O = L-methionyl-(S)-S-oxide-[protein] + [thioredoxin]-dithiol. The catalysed reaction is [thioredoxin]-disulfide + L-methionine + H2O = L-methionine (S)-S-oxide + [thioredoxin]-dithiol. In terms of biological role, has an important function as a repair enzyme for proteins that have been inactivated by oxidation. Catalyzes the reversible oxidation-reduction of methionine sulfoxide in proteins to methionine. This is Peptide methionine sulfoxide reductase MsrA from Mycobacterium leprae (strain Br4923).